Reading from the N-terminus, the 214-residue chain is Elongation factor Ts (214 aa).

Residues 80–83 (TDFV) form an involved in Mg(2+) ion dislocation from EF-Tu region.

Belongs to the EF-Ts family.

The protein resides in the cytoplasm. In terms of biological role, associates with the EF-Tu.GDP complex and induces the exchange of GDP to GTP. It remains bound to the aminoacyl-tRNA.EF-Tu.GTP complex up to the GTP hydrolysis stage on the ribosome. This is Elongation factor Ts from Syntrophomonas wolfei subsp. wolfei (strain DSM 2245B / Goettingen).